Consider the following 355-residue polypeptide: Serum paraoxonase/arylesterase 1 (355 aa).

Residues Cys42 and Cys353 are joined by a disulfide bond. Ca(2+)-binding residues include Glu53 and Asp54. His115 functions as the Proton acceptor in the catalytic mechanism. Ile117, Asn168, Asp169, and Asn224 together coordinate Ca(2+). Asn253 is a glycosylation site (N-linked (GlcNAc...) asparagine). Ca(2+) is bound by residues Asp269 and Asn270. Residues Asn270 and Asn324 are each glycosylated (N-linked (GlcNAc...) asparagine).

This sequence belongs to the paraoxonase family. Homodimer. Interacts with CLU. The cofactor is Ca(2+). Post-translationally, glycosylated. The signal sequence is not cleaved. As to expression, plasma. Associated with HDL.

It is found in the secreted. Its subcellular location is the extracellular space. It carries out the reaction a phenyl acetate + H2O = a phenol + acetate + H(+). It catalyses the reaction An aryl dialkyl phosphate + H2O = dialkyl phosphate + an aryl alcohol.. The catalysed reaction is an N-acyl-L-homoserine lactone + H2O = an N-acyl-L-homoserine + H(+). Functionally, hydrolyzes the toxic metabolites of a variety of organophosphorus insecticides. Capable of hydrolyzing a broad spectrum of organophosphate substrates and lactones, and a number of aromatic carboxylic acid esters. Mediates an enzymatic protection of low density lipoproteins against oxidative modification. The protein is Serum paraoxonase/arylesterase 1 (Pon1) of Rattus norvegicus (Rat).